A 93-amino-acid polypeptide reads, in one-letter code: U12-lycotoxin-Ls1a (93 aa).

A signal peptide spans 1–18 (MKFAVILLFSLVVLTVAS). A propeptide spanning residues 19–38 (ESVEEVRREIDIEDLPEQQR) is cleaved from the precursor.

This sequence belongs to the neurotoxin 31 family. Post-translationally, contains 5 disulfide bonds. In terms of tissue distribution, expressed by the venom gland.

Its subcellular location is the secreted. This is U12-lycotoxin-Ls1a from Lycosa singoriensis (Wolf spider).